The following is a 131-amino-acid chain: Large ribosomal subunit protein bL19 (131 aa).

The segment at 112-131 (KSARIAERAGGPKASASTEA) is disordered.

The protein belongs to the bacterial ribosomal protein bL19 family.

Its function is as follows. This protein is located at the 30S-50S ribosomal subunit interface and may play a role in the structure and function of the aminoacyl-tRNA binding site. This chain is Large ribosomal subunit protein bL19, found in Caulobacter vibrioides (strain ATCC 19089 / CIP 103742 / CB 15) (Caulobacter crescentus).